A 275-amino-acid polypeptide reads, in one-letter code: NH(3)-dependent NAD(+) synthetase (275 aa).

46–53 contributes to the ATP binding site; it reads GISGGQDS. A Mg(2+)-binding site is contributed by Asp52. A deamido-NAD(+)-binding site is contributed by Arg140. ATP is bound at residue Thr160. Glu165 provides a ligand contact to Mg(2+). Lys173 and Asp180 together coordinate deamido-NAD(+). The ATP site is built by Lys189 and Thr211. Residue 260–261 participates in deamido-NAD(+) binding; that stretch reads HK.

The protein belongs to the NAD synthetase family. In terms of assembly, homodimer.

It catalyses the reaction deamido-NAD(+) + NH4(+) + ATP = AMP + diphosphate + NAD(+) + H(+). Its pathway is cofactor biosynthesis; NAD(+) biosynthesis; NAD(+) from deamido-NAD(+) (ammonia route): step 1/1. Its function is as follows. Catalyzes the ATP-dependent amidation of deamido-NAD to form NAD. Uses ammonia as a nitrogen source. The chain is NH(3)-dependent NAD(+) synthetase from Shigella boydii serotype 18 (strain CDC 3083-94 / BS512).